The primary structure comprises 86 residues: Large ribosomal subunit protein bL31B (86 aa).

Belongs to the bacterial ribosomal protein bL31 family. Type B subfamily. In terms of assembly, part of the 50S ribosomal subunit.

The sequence is that of Large ribosomal subunit protein bL31B from Vibrio vulnificus (strain CMCP6).